The following is a 613-amino-acid chain: Acetylcholinesterase (613 aa).

The N-terminal stretch at 1-30 (MRPPWCPLHTPSLTPPLLLLLFLIGGGAEA) is a signal peptide. The N-linked (GlcNAc...) asparagine glycan is linked to Asn91. Cys99 and Cys126 form a disulfide bridge. Residue Ser233 is the Acyl-ester intermediate of the active site. Residues Cys287 and Cys302 are joined by a disulfide bond. A glycan (N-linked (GlcNAc...) asparagine) is linked at Asn295. Glu364 serves as the catalytic Charge relay system. N-linked (GlcNAc...) asparagine glycosylation is present at Asn380. Residues Cys439 and Cys559 are joined by a disulfide bond. His477 serves as the catalytic Charge relay system. Asn494 is a glycosylation site (N-linked (GlcNAc...) asparagine).

Belongs to the type-B carboxylesterase/lipase family. Interacts with PRIMA1. The interaction with PRIMA1 is required to anchor it to the basal lamina of cells and organize into tetramers. Isoform H generates GPI-anchored dimers; disulfide linked. Isoform T generates multiple structures, ranging from monomers and dimers to collagen-tailed and hydrophobic-tailed forms, in which catalytic tetramers are associated with anchoring proteins that attach them to the basal lamina or to cell membranes. In the collagen-tailed forms, isoform T subunits are associated with a specific collagen, COLQ, which triggers the formation of isoform T tetramers, from monomers and dimers.

It localises to the synapse. The protein localises to the secreted. It is found in the cell membrane. The enzyme catalyses acetylcholine + H2O = choline + acetate + H(+). Terminates signal transduction at the neuromuscular junction by rapid hydrolysis of the acetylcholine released into the synaptic cleft. The chain is Acetylcholinesterase (ACHE) from Bos taurus (Bovine).